Here is a 151-residue protein sequence, read N- to C-terminus: Small ribosomal subunit protein uS15z (151 aa).

It belongs to the universal ribosomal protein uS15 family.

This chain is Small ribosomal subunit protein uS15z (RPS13A), found in Arabidopsis thaliana (Mouse-ear cress).